We begin with the raw amino-acid sequence, 119 residues long: Urease subunit beta (119 aa).

It belongs to the urease beta subunit family. As to quaternary structure, heterotrimer of UreA (gamma), UreB (beta) and UreC (alpha) subunits. Three heterotrimers associate to form the active enzyme.

The protein resides in the cytoplasm. The catalysed reaction is urea + 2 H2O + H(+) = hydrogencarbonate + 2 NH4(+). The protein operates within nitrogen metabolism; urea degradation; CO(2) and NH(3) from urea (urease route): step 1/1. The protein is Urease subunit beta of Tolumonas auensis (strain DSM 9187 / NBRC 110442 / TA 4).